A 493-amino-acid chain; its full sequence is 3-octaprenyl-4-hydroxybenzoate carboxy-lyase (493 aa).

Asn-177 contributes to the Mn(2+) binding site. Residues 180–182 (IYR), 194–196 (RWL), and 199–200 (RG) contribute to the prenylated FMN site. Glu-243 is a binding site for Mn(2+). Asp-292 acts as the Proton donor in catalysis.

The protein belongs to the UbiD family. In terms of assembly, homohexamer. The cofactor is prenylated FMN. Requires Mn(2+) as cofactor.

The protein localises to the cell membrane. The enzyme catalyses a 4-hydroxy-3-(all-trans-polyprenyl)benzoate + H(+) = a 2-(all-trans-polyprenyl)phenol + CO2. Its pathway is cofactor biosynthesis; ubiquinone biosynthesis. Catalyzes the decarboxylation of 3-octaprenyl-4-hydroxy benzoate to 2-octaprenylphenol, an intermediate step in ubiquinone biosynthesis. The sequence is that of 3-octaprenyl-4-hydroxybenzoate carboxy-lyase from Colwellia psychrerythraea (strain 34H / ATCC BAA-681) (Vibrio psychroerythus).